A 483-amino-acid polypeptide reads, in one-letter code: Glucose-1-phosphate adenylyltransferase large subunit 3, chloroplastic/amyloplastic (483 aa).

This sequence belongs to the bacterial/plant glucose-1-phosphate adenylyltransferase family. As to quaternary structure, heterotetramer. As to expression, tubers.

The protein localises to the plastid. Its subcellular location is the chloroplast. It is found in the amyloplast. It carries out the reaction alpha-D-glucose 1-phosphate + ATP + H(+) = ADP-alpha-D-glucose + diphosphate. Its pathway is glycan biosynthesis; starch biosynthesis. Activated by 3'phosphoglycerate, inhibited by orthophosphate. Allosteric regulation. This protein plays a role in synthesis of starch. It catalyzes the synthesis of the activated glycosyl donor, ADP-glucose from Glc-1-P and ATP. In Solanum tuberosum (Potato), this protein is Glucose-1-phosphate adenylyltransferase large subunit 3, chloroplastic/amyloplastic (AGPS3).